We begin with the raw amino-acid sequence, 128 residues long: MILGLGLDVVEVARIQRILAGPPARAERFLARVFAPAERAYCDARQDRATRYAARFAAKEAAVKALGTPEGVRWLDLVVERGGGAPSLVLDGIAADAARRLGVARVHLTLTHDGGVAVAAVILEGTGP.

The Mg(2+) site is built by aspartate 8 and glutamate 60.

This sequence belongs to the P-Pant transferase superfamily. AcpS family. Mg(2+) serves as cofactor.

The protein localises to the cytoplasm. The enzyme catalyses apo-[ACP] + CoA = holo-[ACP] + adenosine 3',5'-bisphosphate + H(+). In terms of biological role, transfers the 4'-phosphopantetheine moiety from coenzyme A to a Ser of acyl-carrier-protein. The polypeptide is Holo-[acyl-carrier-protein] synthase (Anaeromyxobacter dehalogenans (strain 2CP-1 / ATCC BAA-258)).